The following is a 443-amino-acid chain: Probable D-serine dehydratase (443 aa).

K118 is subject to N6-(pyridoxal phosphate)lysine.

This sequence belongs to the serine/threonine dehydratase family. DsdA subfamily. Pyridoxal 5'-phosphate is required as a cofactor.

It catalyses the reaction D-serine = pyruvate + NH4(+). This Vibrio campbellii (strain ATCC BAA-1116) protein is Probable D-serine dehydratase.